Reading from the N-terminus, the 293-residue chain is Bifunctional protein FolD (293 aa).

NADP(+) contacts are provided by residues 169–171 (GRG), Thr-196, and Val-237.

Belongs to the tetrahydrofolate dehydrogenase/cyclohydrolase family. As to quaternary structure, homodimer.

It catalyses the reaction (6R)-5,10-methylene-5,6,7,8-tetrahydrofolate + NADP(+) = (6R)-5,10-methenyltetrahydrofolate + NADPH. The catalysed reaction is (6R)-5,10-methenyltetrahydrofolate + H2O = (6R)-10-formyltetrahydrofolate + H(+). It functions in the pathway one-carbon metabolism; tetrahydrofolate interconversion. Catalyzes the oxidation of 5,10-methylenetetrahydrofolate to 5,10-methenyltetrahydrofolate and then the hydrolysis of 5,10-methenyltetrahydrofolate to 10-formyltetrahydrofolate. The chain is Bifunctional protein FolD from Leifsonia xyli subsp. xyli (strain CTCB07).